The sequence spans 485 residues: Glutamyl-tRNA(Gln) amidotransferase subunit A (485 aa).

Active-site charge relay system residues include lysine 79 and serine 154. Serine 178 serves as the catalytic Acyl-ester intermediate.

This sequence belongs to the amidase family. GatA subfamily. In terms of assembly, heterotrimer of A, B and C subunits.

The enzyme catalyses L-glutamyl-tRNA(Gln) + L-glutamine + ATP + H2O = L-glutaminyl-tRNA(Gln) + L-glutamate + ADP + phosphate + H(+). Its function is as follows. Allows the formation of correctly charged Gln-tRNA(Gln) through the transamidation of misacylated Glu-tRNA(Gln) in organisms which lack glutaminyl-tRNA synthetase. The reaction takes place in the presence of glutamine and ATP through an activated gamma-phospho-Glu-tRNA(Gln). The chain is Glutamyl-tRNA(Gln) amidotransferase subunit A from Geobacillus stearothermophilus (Bacillus stearothermophilus).